Here is a 700-residue protein sequence, read N- to C-terminus: Mitosis inducer protein blt1 (700 aa).

Composition is skewed to polar residues over residues 1–11 and 43–53; these read MSKSAFTSKSQ and PRSTALPNLSN. Disordered stretches follow at residues 1 to 53 and 266 to 293; these read MSKS…NLSN and TNNRKPVGSDGSNSNFNGGEEQMDSKDQ. Over residues 273–284 the composition is skewed to low complexity; that stretch reads GSDGSNSNFNGG. A coiled-coil region spans residues 496–575; it reads SVALDDHNRQ…LNMLQKLSMQ (80 aa). 2 disordered regions span residues 634 to 659 and 671 to 700; these read FSSFSGSSSKLPVRPSTALTDKRKPS and SSGSPEKKHVITSSDAGHQRSKSRSFSSKM. Ser-636 carries the post-translational modification Phosphoserine.

In terms of assembly, interacts with cdr2, mid1 and sad1.

Its subcellular location is the cytoplasm. It is found in the cytoskeleton. In terms of biological role, at the onset of mitosis, forms a medial ring structure before the arrangement of the medial actin ring. Essential for the central positioning of the division septum before the cell divides. The sequence is that of Mitosis inducer protein blt1 (blt1) from Schizosaccharomyces pombe (strain 972 / ATCC 24843) (Fission yeast).